Consider the following 818-residue polypeptide: MTDTRRRVKVYTLNEDRQWDDRGTGHVSSAYVERLKGMSLLVRAESDGSLLLESKINPNTAYQKQQDTLIVWSEAENYDLALSFQEKAGCDEIWEKICQVQGKDPSVDITQELIDESEEERFDDMSSPGLELPPCELSRLEEVAELVASSLPSPLRREKLALALENEGYIRKLLELFRVCEDLENREGLHHLYDIIKGIFLLNRTALFEVMFSEECIMDVIGCLEFDPSLPQPRRHREFLTTTARFKEVIPISDPELRQKIHQTYRVQYIQDMVLPTPSVFEENMLSTLHSFIFFNKVEIVGMLQDDEKFLTELFAQLTDEATDDDKRHELVNFLKEFCAFSQTLQPQNRDAFFKTLSNMGILQALEVILGMDDVQVRGAATDIFSYLVEYNPSMVREFVMQESQQNDDDILLINLIIEHMICDTDPELGGAVQLMGLLRTLVDPENMLATANKTEKTEFLSFFYKHCMHVLSAPLLANTTEEKPSKDDFQTCQLLALIVELLTFCVEHHTYHIKNYIINKDILRRVLVLTASQHAFLALCALRFMRKIIGLKDEFYNRYIMRNFLFEPVVKAFLNNGSRYNLINSAIIEMFEYVRVEDVKSLTAHIIENYWKGLEDVDYVQTFKGLKLRYEQQRERQDNPKLDSMRSILRNHRFRRDARTLEDEEEMWFNTDEEDLEDGEAVVPPSDKMKNDEDLMDPISKFMERKKLKDSEEKEVLTGKASLSGRQSPSFKLSFSSSPKASLSSPPTASLHPGSPGSPSSPGTGARSSPPSAAVTTKGGLVGLVDYPDDDEEDEDEEDADSKEESPPLSKKSKLSS.

In terms of domain architecture, WH1 spans 1 to 100 (MTDTRRRVKV…DEIWEKICQV (100 aa)). Over residues 670–681 (FNTDEEDLEDGE) the composition is skewed to acidic residues. Residues 670-818 (FNTDEEDLED…PLSKKSKLSS (149 aa)) form a disordered region. The span at 703–718 (FMERKKLKDSEEKEVL) shows a compositional bias: basic and acidic residues. A compositionally biased stretch (low complexity) spans 729–775 (SPSFKLSFSSSPKASLSSPPTASLHPGSPGSPSSPGTGARSSPPSAA). Serine 769 and serine 770 each carry phosphoserine. Over residues 788–803 (YPDDDEEDEDEEDADS) the composition is skewed to acidic residues.

It belongs to the SMEK family. Serine/threonine-protein phosphatase 4 (PP4) occurs in different assemblies of the catalytic and one or more regulatory subunits.

In terms of biological role, regulatory subunit of serine/threonine-protein phosphatase 4. This is Serine/threonine-protein phosphatase 4 regulatory subunit 3 (smek1) from Danio rerio (Zebrafish).